Reading from the N-terminus, the 140-residue chain is Putative nickel-responsive regulator 2 (140 aa).

Residues histidine 81, histidine 92, histidine 94, and cysteine 100 each coordinate Ni(2+).

The protein belongs to the transcriptional regulatory CopG/NikR family. Ni(2+) serves as cofactor.

Transcriptional regulator. The chain is Putative nickel-responsive regulator 2 from Methanosarcina acetivorans (strain ATCC 35395 / DSM 2834 / JCM 12185 / C2A).